The sequence spans 341 residues: NADH-quinone oxidoreductase subunit H 1 (341 aa).

The next 8 membrane-spanning stretches (helical) occupy residues 13 to 33 (LVVI…IAYI), 82 to 102 (GVFL…WAVI), 115 to 135 (VGVL…IMAG), 161 to 181 (IGFV…TAIV), 190 to 210 (LLGW…VSAL), 248 to 268 (YVAI…GWLP), 277 to 297 (WVPG…LFAM), and 317 to 337 (VFLP…QFAG).

It belongs to the complex I subunit 1 family. As to quaternary structure, NDH-1 is composed of 14 different subunits. Subunits NuoA, H, J, K, L, M, N constitute the membrane sector of the complex.

It is found in the cell inner membrane. The catalysed reaction is a quinone + NADH + 5 H(+)(in) = a quinol + NAD(+) + 4 H(+)(out). In terms of biological role, NDH-1 shuttles electrons from NADH, via FMN and iron-sulfur (Fe-S) centers, to quinones in the respiratory chain. The immediate electron acceptor for the enzyme in this species is believed to be ubiquinone. Couples the redox reaction to proton translocation (for every two electrons transferred, four hydrogen ions are translocated across the cytoplasmic membrane), and thus conserves the redox energy in a proton gradient. This subunit may bind ubiquinone. This Rhodopseudomonas palustris (strain BisB18) protein is NADH-quinone oxidoreductase subunit H 1.